The primary structure comprises 1070 residues: DNA-directed RNA polymerase subunit beta (1070 aa).

This sequence belongs to the RNA polymerase beta chain family. In plastids the minimal PEP RNA polymerase catalytic core is composed of four subunits: alpha, beta, beta', and beta''. When a (nuclear-encoded) sigma factor is associated with the core the holoenzyme is formed, which can initiate transcription.

The protein localises to the plastid. It localises to the chloroplast. It catalyses the reaction RNA(n) + a ribonucleoside 5'-triphosphate = RNA(n+1) + diphosphate. Its function is as follows. DNA-dependent RNA polymerase catalyzes the transcription of DNA into RNA using the four ribonucleoside triphosphates as substrates. This is DNA-directed RNA polymerase subunit beta from Vitis vinifera (Grape).